The sequence spans 412 residues: MYCRVFTHFSLYRLYTLSDNININKTNHNKSIGLHQHRVNYMPRSMTASSSQLKRIETRIESLSESLSKSNARKPLGKFQLNTFDNNKITKLQNEKVRPSKSSHIPVKSPIRKKGHSPAQVLQNERMDTKLLLQKLPSASRHMTLDDFEIGKVLGKGKLGKVYCVKHKTSGYIAALKVMAKKDLIDLKLEKNFRREIEIQSNLIHPKISRLYGFFYDHKNVYLILEYSIHGELYHHLKVQRRFNDATASHYIYQVALALDYLHTKHIIHRDIKPENILLSTDNCIKLSDFGWSVKSSPSSSTKRLTICGTLDYLPPEMIESNEHDYTVDIWSLGILCYEFLVGKPPFEEIDKNSTYKRIAKVDLKIPSFLSSEATDLILRLLQKSPKKRITLAEVMNHPWIMNNQQYWPNEN.

Residues 94–119 (NEKVRPSKSSHIPVKSPIRKKGHSPA) form a disordered region. Residues 148–401 (FEIGKVLGKG…LAEVMNHPWI (254 aa)) enclose the Protein kinase domain. ATP is bound by residues 154 to 162 (LGKGKLGKV) and Lys-177. The active-site Proton acceptor is Asp-271.

This sequence belongs to the protein kinase superfamily. Ser/Thr protein kinase family. Aurora subfamily.

The protein resides in the nucleus. The protein localises to the cytoplasm. It localises to the cytoskeleton. It is found in the spindle. Its subcellular location is the chromosome. The protein resides in the centromere. The protein localises to the kinetochore. It catalyses the reaction L-seryl-[protein] + ATP = O-phospho-L-seryl-[protein] + ADP + H(+). The catalysed reaction is L-threonyl-[protein] + ATP = O-phospho-L-threonyl-[protein] + ADP + H(+). In terms of biological role, component of the chromosomal passenger complex (CPC), a complex that acts as a key regulator of chromosome segregation and cytokinesis. Has a role in error-correction of aberrent kinetochore-microtubule attachments to ensure that sister kinetochores become bioriented and connect to opposite poles by promoting spindle assembly checkpoint signaling. The chain is Aurora kinase (IPL1) from Debaryomyces hansenii (strain ATCC 36239 / CBS 767 / BCRC 21394 / JCM 1990 / NBRC 0083 / IGC 2968) (Yeast).